A 3503-amino-acid polypeptide reads, in one-letter code: Protein dachsous (3503 aa).

An N-terminal signal peptide occupies residues 1–20; the sequence is MLRSSLLILLAIVLLGSSQA. The Extracellular segment spans residues 21–3045; sequence ASHDQERERK…SSSGSIGDWA (3025 aa). Cadherin domains are found at residues 22–121, 122–233, 234–340, 345–451, 452–558, 559–662, 663–774, 775–878, 879–983, 984–1100, 1101–1203, 1205–1312, 1313–1432, and 1433–1549; these read SHDQ…APTF, PQTS…QPIF, NQSR…QPTI, LSDD…PPEF, EQDL…EPIF, DQSF…RPVF, YPRE…PPIF, EKAR…APEF, EASM…PPVF, EKDE…DPKF, QKSK…APEI, DPQE…RPTF, TSSS…APEW, and PQDP…APHF. N-linked (GlcNAc...) asparagine glycosylation is found at N220 and N234. The residue at position 236 (S236) is a Phosphoserine. 3 N-linked (GlcNAc...) asparagine glycosylation sites follow: N245, N381, and N416. 3 N-linked (GlcNAc...) asparagine glycosylation sites follow: N564, N594, and N743. 6 N-linked (GlcNAc...) asparagine glycosylation sites follow: N966, N991, N1006, N1029, N1143, and N1236. N-linked (GlcNAc...) asparagine glycosylation is found at N1453, N1479, N1524, and N1553. 13 Cadherin domains span residues 1556–1666, 1667–1794, 1796–1899, 1900–2004, 2005–2111, 2114–2269, 2270–2375, 2375–2479, 2489–2595, 2596–2699, 2701–2809, 2810–2916, and 2919–3028; these read GGKT…PPRF, LQAV…SPEF, PGSC…APRF, KLSK…RPIF, ERYP…TPVL, QNET…SPKF, SQKQ…QPTF, FPPN…APVF, AILP…RSQF, LQNQ…FPIF, RSAK…EPKF, PLTE…TPQF, and RTYR…HPGT. Residues N1700, N1884, and N1940 are each glycosylated (N-linked (GlcNAc...) asparagine). N2115 is a glycosylation site (N-linked (GlcNAc...) asparagine). A disordered region spans residues 2193–2225; it reads GRALHYEEEIDESSEEDPNNSTRSQRALTSSSF. Over residues 2200–2210 the composition is skewed to acidic residues; sequence EEIDESSEEDP. 2 N-linked (GlcNAc...) asparagine glycosylation sites follow: N2211 and N2212. Residues 2211–2225 show a composition bias toward polar residues; that stretch reads NNSTRSQRALTSSSF. N-linked (GlcNAc...) asparagine glycosylation is found at N2421, N2511, N2520, N2547, N2588, and N2678. N-linked (GlcNAc...) asparagine glycosylation is found at N2845 and N2967. Residues 3046–3066 traverse the membrane as a helical segment; sequence IGLLVAFLLVLCAAAGIFLFI. Residues 3067-3503 are Cytoplasmic-facing; the sequence is HMRSRKPRNA…SQRGNVGTRM (437 aa). Disordered regions lie at residues 3114–3195, 3360–3404, and 3431–3503; these read AGAA…GRIS, LSEH…IPPP, and LPRS…GTRM. Composition is skewed to low complexity over residues 3133 to 3159 and 3363 to 3372; these read GAHAGSSGAATTSELSGSEQSGSSGRG and HSGSGASSSA. Residues 3391 to 3404 show a composition bias toward pro residues; sequence KPPPSAPPTHIPPP. A compositionally biased stretch (low complexity) spans 3440-3463; the sequence is ASGSFSTSSAMSPSFSPSLSPLAT. Residues S3465 and S3469 each carry the phosphoserine modification. The span at 3492 to 3503 shows a compositional bias: polar residues; that stretch reads QPSQRGNVGTRM.

As to quaternary structure, interacts (via cytoplasmic region) with Myo31DF. Post-translationally, phosphorylated by fj on Ser/Thr of cadherin domains. Expressed in embryonic ectoderm. In larvae, expression is restricted to imaginal disks and brain.

Its subcellular location is the cell membrane. It is found in the cell junction. Its function is as follows. Required for normal morphogenesis of adult structures derived from imaginal disks. Plays a role in planar cell polarity and in determining body left-right asymmetry. Expression in segment H1 of the imaginal ring and interaction with Myo31DF are required to induce changes of cell shape and orientation in segment H2, which then gives rise to normal, dextral looping of the adult hindgut. This chain is Protein dachsous (ds), found in Drosophila melanogaster (Fruit fly).